Reading from the N-terminus, the 42-residue chain is Potassium channel toxin gamma-KTx 1.8 (42 aa).

Disulfide bonds link Cys-5–Cys-23, Cys-11–Cys-34, Cys-20–Cys-39, and Cys-24–Cys-41.

The protein belongs to the ergtoxin family. Gamma-KTx 1 subfamily. Expressed by the venom gland.

The protein localises to the secreted. Its function is as follows. Blocks in a reversible manner human and rat Kv11.1/KCNH2/ERG1 potassium channels. Also completely and irreversibly blocks rat Kv11.2/KCNH6/ERG2 and human Kv11.3/KCNH7/ERG3 channels. Also weakly inhibits Kir2.1/KCNJ2 and Kv1.2/KCNA2 potassium channels. In Centruroides elegans (Bark scorpion), this protein is Potassium channel toxin gamma-KTx 1.8.